Here is a 560-residue protein sequence, read N- to C-terminus: DNA ligase B (560 aa).

Lysine 124 functions as the N6-AMP-lysine intermediate in the catalytic mechanism.

It belongs to the NAD-dependent DNA ligase family. LigB subfamily.

It catalyses the reaction NAD(+) + (deoxyribonucleotide)n-3'-hydroxyl + 5'-phospho-(deoxyribonucleotide)m = (deoxyribonucleotide)n+m + AMP + beta-nicotinamide D-nucleotide.. Functionally, catalyzes the formation of phosphodiester linkages between 5'-phosphoryl and 3'-hydroxyl groups in double-stranded DNA using NAD as a coenzyme and as the energy source for the reaction. The chain is DNA ligase B from Citrobacter koseri (strain ATCC BAA-895 / CDC 4225-83 / SGSC4696).